The primary structure comprises 205 residues: Holliday junction branch migration complex subunit RuvA (205 aa).

The interval methionine 1–arginine 64 is domain I. Positions threonine 65 to valine 143 are domain II. The segment at histidine 144 to alanine 154 is flexible linker. A domain III region spans residues alanine 154–lysine 205.

The protein belongs to the RuvA family. As to quaternary structure, homotetramer. Forms an RuvA(8)-RuvB(12)-Holliday junction (HJ) complex. HJ DNA is sandwiched between 2 RuvA tetramers; dsDNA enters through RuvA and exits via RuvB. An RuvB hexamer assembles on each DNA strand where it exits the tetramer. Each RuvB hexamer is contacted by two RuvA subunits (via domain III) on 2 adjacent RuvB subunits; this complex drives branch migration. In the full resolvosome a probable DNA-RuvA(4)-RuvB(12)-RuvC(2) complex forms which resolves the HJ.

It localises to the cytoplasm. In terms of biological role, the RuvA-RuvB-RuvC complex processes Holliday junction (HJ) DNA during genetic recombination and DNA repair, while the RuvA-RuvB complex plays an important role in the rescue of blocked DNA replication forks via replication fork reversal (RFR). RuvA specifically binds to HJ cruciform DNA, conferring on it an open structure. The RuvB hexamer acts as an ATP-dependent pump, pulling dsDNA into and through the RuvAB complex. HJ branch migration allows RuvC to scan DNA until it finds its consensus sequence, where it cleaves and resolves the cruciform DNA. The sequence is that of Holliday junction branch migration complex subunit RuvA from Nitrobacter winogradskyi (strain ATCC 25391 / DSM 10237 / CIP 104748 / NCIMB 11846 / Nb-255).